The chain runs to 127 residues: uncharacterized protein (127 aa).

The first 26 residues, 1–26 (MKAIYALLAVVALALVAVSLFSQSDS), serve as a signal peptide directing secretion.

This is an uncharacterized protein from Archaeoglobus fulgidus (strain ATCC 49558 / DSM 4304 / JCM 9628 / NBRC 100126 / VC-16).